Here is a 418-residue protein sequence, read N- to C-terminus: Gamma-glutamyl phosphate reductase (418 aa).

The protein belongs to the gamma-glutamyl phosphate reductase family.

It localises to the cytoplasm. It carries out the reaction L-glutamate 5-semialdehyde + phosphate + NADP(+) = L-glutamyl 5-phosphate + NADPH + H(+). Its pathway is amino-acid biosynthesis; L-proline biosynthesis; L-glutamate 5-semialdehyde from L-glutamate: step 2/2. Its function is as follows. Catalyzes the NADPH-dependent reduction of L-glutamate 5-phosphate into L-glutamate 5-semialdehyde and phosphate. The product spontaneously undergoes cyclization to form 1-pyrroline-5-carboxylate. In Thermodesulfovibrio yellowstonii (strain ATCC 51303 / DSM 11347 / YP87), this protein is Gamma-glutamyl phosphate reductase.